The primary structure comprises 301 residues: Glycine--tRNA ligase alpha subunit (301 aa).

This sequence belongs to the class-II aminoacyl-tRNA synthetase family. Tetramer of two alpha and two beta subunits.

It is found in the cytoplasm. The catalysed reaction is tRNA(Gly) + glycine + ATP = glycyl-tRNA(Gly) + AMP + diphosphate. The polypeptide is Glycine--tRNA ligase alpha subunit (Pseudoalteromonas atlantica (strain T6c / ATCC BAA-1087)).